We begin with the raw amino-acid sequence, 92 residues long: MELNILNKTNNELEVELRGETHTLLNLLKDLLIKDERVEAAFYDMKHVSISDPILYIKTDGTDPILVLKETAAIIIAQCDEFIDVFSKAANA.

Belongs to the archaeal Rpo11/eukaryotic RPB11/RPC19 RNA polymerase subunit family. Part of the RNA polymerase complex.

The protein resides in the cytoplasm. It catalyses the reaction RNA(n) + a ribonucleoside 5'-triphosphate = RNA(n+1) + diphosphate. In terms of biological role, DNA-dependent RNA polymerase (RNAP) catalyzes the transcription of DNA into RNA using the four ribonucleoside triphosphates as substrates. The sequence is that of DNA-directed RNA polymerase subunit Rpo11 from Methanosarcina acetivorans (strain ATCC 35395 / DSM 2834 / JCM 12185 / C2A).